We begin with the raw amino-acid sequence, 284 residues long: 2-dehydro-3-deoxyphosphooctonate aldolase (284 aa).

It belongs to the KdsA family.

The protein localises to the cytoplasm. The enzyme catalyses D-arabinose 5-phosphate + phosphoenolpyruvate + H2O = 3-deoxy-alpha-D-manno-2-octulosonate-8-phosphate + phosphate. It functions in the pathway carbohydrate biosynthesis; 3-deoxy-D-manno-octulosonate biosynthesis; 3-deoxy-D-manno-octulosonate from D-ribulose 5-phosphate: step 2/3. The protein operates within bacterial outer membrane biogenesis; lipopolysaccharide biosynthesis. This Paraburkholderia xenovorans (strain LB400) protein is 2-dehydro-3-deoxyphosphooctonate aldolase.